The primary structure comprises 96 residues: Large ribosomal subunit protein bL27 (96 aa).

The propeptide occupies 1 to 9 (MLRLDLQFF). Residues 13–35 (KGVGSTKNGRDSQSKRLGAKRAD) form a disordered region.

Belongs to the bacterial ribosomal protein bL27 family. In terms of processing, the N-terminus is cleaved by ribosomal processing cysteine protease Prp.

The polypeptide is Large ribosomal subunit protein bL27 (Bacillus cereus (strain B4264)).